The following is a 122-amino-acid chain: Small ribosomal subunit protein uS13 (122 aa).

Positions 95–122 (QLPVRGQRTHTNARTRKGKAKPIAGKKK) are disordered.

This sequence belongs to the universal ribosomal protein uS13 family. In terms of assembly, part of the 30S ribosomal subunit. Forms a loose heterodimer with protein S19. Forms two bridges to the 50S subunit in the 70S ribosome.

Its function is as follows. Located at the top of the head of the 30S subunit, it contacts several helices of the 16S rRNA. In the 70S ribosome it contacts the 23S rRNA (bridge B1a) and protein L5 of the 50S subunit (bridge B1b), connecting the 2 subunits; these bridges are implicated in subunit movement. Contacts the tRNAs in the A and P-sites. This Beijerinckia indica subsp. indica (strain ATCC 9039 / DSM 1715 / NCIMB 8712) protein is Small ribosomal subunit protein uS13.